The primary structure comprises 342 residues: Protein-glutamate methylesterase/protein-glutamine glutaminase 2 (342 aa).

Residues 2-119 (NIGIVNDLPL…GGSADPSQPL (118 aa)) enclose the Response regulatory domain. At Asp-53 the chain carries 4-aspartylphosphate. A CheB-type methylesterase domain is found at 144 to 337 (PAPQGALPPL…DQLISLVQRN (194 aa)). Residues Ser-159, His-186, and Asp-279 contribute to the active site.

It belongs to the CheB family. In terms of processing, phosphorylated by CheA. Phosphorylation of the N-terminal regulatory domain activates the methylesterase activity.

The protein localises to the cytoplasm. The catalysed reaction is [protein]-L-glutamate 5-O-methyl ester + H2O = L-glutamyl-[protein] + methanol + H(+). It carries out the reaction L-glutaminyl-[protein] + H2O = L-glutamyl-[protein] + NH4(+). Its function is as follows. Involved in chemotaxis. Part of a chemotaxis signal transduction system that modulates chemotaxis in response to various stimuli. Catalyzes the demethylation of specific methylglutamate residues introduced into the chemoreceptors (methyl-accepting chemotaxis proteins or MCP) by CheR. Also mediates the irreversible deamidation of specific glutamine residues to glutamic acid. This Burkholderia mallei (strain ATCC 23344) protein is Protein-glutamate methylesterase/protein-glutamine glutaminase 2.